A 466-amino-acid chain; its full sequence is Ribosomal protein uS12 methylthiotransferase RimO (466 aa).

In terms of domain architecture, MTTase N-terminal spans 15–125 (PKVGFVSLGC…VMEAVHAALP (111 aa)). Positions 24, 60, 89, 156, 160, and 163 each coordinate [4Fe-4S] cluster. The Radical SAM core domain occupies 142 to 380 (LTPRHYAYLK…AKQAEISALR (239 aa)). A TRAM domain is found at 382–450 (EAKIGSVQQC…EHDLFGDALP (69 aa)).

This sequence belongs to the methylthiotransferase family. RimO subfamily. Requires [4Fe-4S] cluster as cofactor.

The protein resides in the cytoplasm. It carries out the reaction L-aspartate(89)-[ribosomal protein uS12]-hydrogen + (sulfur carrier)-SH + AH2 + 2 S-adenosyl-L-methionine = 3-methylsulfanyl-L-aspartate(89)-[ribosomal protein uS12]-hydrogen + (sulfur carrier)-H + 5'-deoxyadenosine + L-methionine + A + S-adenosyl-L-homocysteine + 2 H(+). Its function is as follows. Catalyzes the methylthiolation of an aspartic acid residue of ribosomal protein uS12. The polypeptide is Ribosomal protein uS12 methylthiotransferase RimO (Xanthomonas oryzae pv. oryzae (strain MAFF 311018)).